The sequence spans 291 residues: RPE-retinal G protein-coupled receptor (291 aa).

The Extracellular segment spans residues 1-15; the sequence is MAATRALPAGLGELE. A helical transmembrane segment spans residues 16-36; the sequence is VLAVGTVLLMEALSGISLNGL. The Cytoplasmic portion of the chain corresponds to 37-52; that stretch reads TIFSFCKTPDLRTPSN. A helical membrane pass occupies residues 53–73; it reads LLVLSLALADTGISLNALVAA. Residues 74–91 are Extracellular-facing; that stretch reads VSSLLRRWPHGSEGCQVH. A disulfide bond links cysteine 88 and cysteine 162. Residues 92–112 form a helical membrane-spanning segment; it reads GFQGFATALASICGSAAVAWG. At 113 to 130 the chain is on the cytoplasmic side; sequence RYHHYCTRRQLAWDTAIP. A helical transmembrane segment spans residues 131 to 151; sequence LVLFVWMSSAFWASLPLMGWG. At 152–175 the chain is on the extracellular side; that stretch reads HYDYEPVGTCCTLDYSRGDRNFIS. A helical transmembrane segment spans residues 176 to 196; that stretch reads FLFTMAFFNFLVPLFITHTSY. The Cytoplasmic segment spans residues 197–219; that stretch reads RFMEQKFSRSGHLPVNTTLPGRM. The helical transmembrane segment at 220 to 240 threads the bilayer; the sequence is LLLGWGPYALLYLYAAIADVS. The Extracellular portion of the chain corresponds to 241–247; sequence FISPKLQ. The chain crosses the membrane as a helical span at residues 248–268; the sequence is MVPALIAKTMPTINAINYALH. Lysine 255 is modified (N6-(retinylidene)lysine). Topologically, residues 269-291 are cytoplasmic; sequence REMVCRGTWQCLSPQKSKKDRTQ.

This sequence belongs to the G-protein coupled receptor 1 family. Opsin subfamily. In terms of processing, covalently binds all-trans- and 11-cis-retinal.

It localises to the membrane. Receptor for all-trans- and 11-cis-retinal. Binds preferentially to the former and may catalyze the isomerization of the chromophore by a retinochrome-like mechanism. In Mus musculus (Mouse), this protein is RPE-retinal G protein-coupled receptor (Rgr).